Here is a 120-residue protein sequence, read N- to C-terminus: Large ribosomal subunit protein uL22 (120 aa).

This sequence belongs to the universal ribosomal protein uL22 family. As to quaternary structure, part of the 50S ribosomal subunit.

In terms of biological role, this protein binds specifically to 23S rRNA; its binding is stimulated by other ribosomal proteins, e.g. L4, L17, and L20. It is important during the early stages of 50S assembly. It makes multiple contacts with different domains of the 23S rRNA in the assembled 50S subunit and ribosome. Functionally, the globular domain of the protein is located near the polypeptide exit tunnel on the outside of the subunit, while an extended beta-hairpin is found that lines the wall of the exit tunnel in the center of the 70S ribosome. The sequence is that of Large ribosomal subunit protein uL22 from Corynebacterium aurimucosum (strain ATCC 700975 / DSM 44827 / CIP 107346 / CN-1) (Corynebacterium nigricans).